The following is a 187-amino-acid chain: Putative manganese efflux pump MntP (187 aa).

A run of 6 helical transmembrane segments spans residues 3–23 (MSATLILAFAMSMDAFAASIG), 41–61 (LIFGVIEAITPLIGWALGFFA), 62–82 (SQYILEWDHWVAFTLLLILGG), 107–129 (LLVCTAIATSLDAMAIGVGLAFL), 143–163 (ATMIMVTLGMMIGRYIGPILG), and 166–186 (AEIIGGLVLIGIGCNILYEHL).

Belongs to the MntP (TC 9.B.29) family.

Its subcellular location is the cell inner membrane. In terms of biological role, probably functions as a manganese efflux pump. This is Putative manganese efflux pump MntP from Pectobacterium atrosepticum (strain SCRI 1043 / ATCC BAA-672) (Erwinia carotovora subsp. atroseptica).